We begin with the raw amino-acid sequence, 84 residues long: Subtilisin-chymotrypsin inhibitor WSCI (84 aa).

Positions 1-12 (MSSVVKKPLGGN) are cleaved as a signal peptide. Residues 1-28 (MSSVVKKPLGGNTDTGDHHNQKTEWPEL) form a disordered region. Residues 15–25 (TGDHHNQKTEW) show a composition bias toward basic and acidic residues.

Monomer.

Its subcellular location is the secreted. Its function is as follows. Inhibits B.lichenoformis subtilisin, B.subtilis subtilisin, bovine pancreatic alpha-chymotrypsin and porcine alpha-chymotrypsin with Ki of 3.92 nM, 5.70 nM, 7.24 nM and 9.35 nM respectively. B.lichenoformis subtilisin is inhibited with a molar ratio of 1:0.87. Also inhibits chymotrypsin-like activities from the digestive tracts of the insect larvae T.molitor, P.interpunctella and H.armigera. Does not inhibit bovine pancreatic trypsin, porcine pancreatic elastase, or human leukocyte elastase. This is Subtilisin-chymotrypsin inhibitor WSCI from Triticum aestivum (Wheat).